A 500-amino-acid polypeptide reads, in one-letter code: Protein O-glucosyltransferase 2 (500 aa).

The first 22 residues, 1–22 (MLRKLLLLLMSCIIFLTRRSKA), serve as a signal peptide directing secretion. The stretch at 23 to 128 (AAAASASKTL…LVGKSPYVLR (106 aa)) is one Filamin repeat. Asparagine 60 and asparagine 259 each carry an N-linked (GlcNAc...) asparagine glycan. Residues 497-500 (RDEL) carry the Prevents secretion from ER motif.

The protein belongs to the KDELC family.

It is found in the endoplasmic reticulum lumen. The catalysed reaction is L-seryl-[EGF-like domain protein] + UDP-alpha-D-glucose = 3-O-(beta-D-glucosyl)-L-seryl-[EGF-like domain protein] + UDP + H(+). It carries out the reaction L-seryl-[EGF-like domain protein] + UDP-alpha-D-xylose = 3-O-(beta-D-xylosyl)-L-seryl-[EGF-like domain protein] + UDP + H(+). It functions in the pathway protein modification; protein glycosylation. Its function is as follows. Protein glucosyltransferase that catalyzes the transfer of glucose from UDP-glucose to a serine residue within the consensus sequence peptide C-X-N-T-X-G-S-F-X-C. Can also catalyze the transfer of xylose from UDP-xylose but less efficiently. In Danio rerio (Zebrafish), this protein is Protein O-glucosyltransferase 2 (poglut2).